The primary structure comprises 153 residues: Arginine repressor (153 aa).

Belongs to the ArgR family.

The protein resides in the cytoplasm. It participates in amino-acid biosynthesis; L-arginine biosynthesis [regulation]. Its function is as follows. Regulates arginine biosynthesis genes. The chain is Arginine repressor from Clostridium tetani (strain Massachusetts / E88).